The primary structure comprises 667 residues: Chaperone protein DnaK (667 aa).

Thr-196 is modified (phosphothreonine; by autocatalysis). Disordered stretches follow at residues 495–525 (EANSGLSDEEIEKMKEEAEQHAEEDERRKER) and 595–667 (AGEE…GDDE). Residues 506–525 (EKMKEEAEQHAEEDERRKER) are compositionally biased toward basic and acidic residues. Low complexity predominate over residues 595–612 (AGEEIREAQQQQAQQGAA). Over residues 630-641 (GPAGGPTGGPAS) the composition is skewed to gly residues. The segment covering 647–667 (DSDEEDVQDADYEVVDEGDDE) has biased composition (acidic residues).

Belongs to the heat shock protein 70 family.

Acts as a chaperone. The sequence is that of Chaperone protein DnaK from Salinibacter ruber (strain DSM 13855 / M31).